A 391-amino-acid polypeptide reads, in one-letter code: 3-ketoacyl-CoA thiolase (391 aa).

Catalysis depends on Cys-90, which acts as the Acyl-thioester intermediate. Residues His-347 and Cys-377 each act as proton acceptor in the active site.

It belongs to the thiolase-like superfamily. Thiolase family.

It catalyses the reaction an acyl-CoA + acetyl-CoA = a 3-oxoacyl-CoA + CoA. It participates in lipid metabolism; fatty acid beta-oxidation. Functionally, involved in the degradation of long-chain fatty acids. The sequence is that of 3-ketoacyl-CoA thiolase (fadA) from Bacillus subtilis (strain 168).